Here is a 1080-residue protein sequence, read N- to C-terminus: ATP-dependent helicase/deoxyribonuclease subunit B (1080 aa).

Belongs to the helicase family. AddB/RexB type 2 subfamily. Heterodimer of AddA and RexB. Requires Mg(2+) as cofactor.

In terms of biological role, the heterodimer acts as both an ATP-dependent DNA helicase and an ATP-dependent, dual-direction single-stranded exonuclease. Recognizes the chi site generating a DNA molecule suitable for the initiation of homologous recombination. This subunit has 5' -&gt; 3' nuclease activity but not helicase activity. The chain is ATP-dependent helicase/deoxyribonuclease subunit B from Streptococcus mutans serotype c (strain ATCC 700610 / UA159).